We begin with the raw amino-acid sequence, 109 residues long: UPF0154 protein UPA3_0273 (109 aa).

The helical transmembrane segment at V42 to I62 threads the bilayer.

Belongs to the UPF0154 family.

It localises to the cell membrane. This is UPF0154 protein UPA3_0273 from Ureaplasma parvum serovar 3 (strain ATCC 27815 / 27 / NCTC 11736).